The following is a 285-amino-acid chain: Inositol oxygenase (285 aa).

Arginine 29 is a binding site for substrate. Serine 33 is subject to Phosphoserine. A substrate-binding site is contributed by 85 to 87 (DES). Residues histidine 98, histidine 123, and aspartate 124 each contribute to the Fe cation site. Residues lysine 127 and 141–142 (GD) each bind substrate. Positions 194, 220, and 253 each coordinate Fe cation. 220–221 (HS) is a substrate binding site.

It belongs to the myo-inositol oxygenase family. Fe cation serves as cofactor.

Its subcellular location is the cytoplasm. It catalyses the reaction myo-inositol + O2 = D-glucuronate + H2O + H(+). It participates in polyol metabolism; myo-inositol degradation into D-glucuronate; D-glucuronate from myo-inositol: step 1/1. This Pongo abelii (Sumatran orangutan) protein is Inositol oxygenase (MIOX).